The following is a 295-amino-acid chain: MTNVTGTERVKRGMAEMQKGGVIMDVVNAEQAKIAEEAGAVAVMALERVPADIRAAGGVSRMADPTIVEEVMGAVSIPVMAKCRIGHLVEARVLESLGVDYIDESEVLTPADEVYHLNKRDYTVPFVCGCRDIGEAARRIAEGASMLRTKGEPGTGNIVEAVRHMRQVNAEIRQVASLREDELMTYAKNTGAPYEVLLEIKRLGRLPVVNFAAGGVATPADAALMMQLGADGVFVGSGIFKSENPEKFARAIVEATTHYEDYELIASLSKGLGNAMKGVEISTLLPEQRMQERGW.

Asp25 provides a ligand contact to D-ribose 5-phosphate. The active-site Schiff-base intermediate with D-ribose 5-phosphate is Lys82. Gly154 is a D-ribose 5-phosphate binding site. Arg166 is a D-glyceraldehyde 3-phosphate binding site. D-ribose 5-phosphate contacts are provided by residues Gly215 and 236–237 (GS).

It belongs to the PdxS/SNZ family. In terms of assembly, in the presence of PdxT, forms a dodecamer of heterodimers.

The catalysed reaction is aldehydo-D-ribose 5-phosphate + D-glyceraldehyde 3-phosphate + L-glutamine = pyridoxal 5'-phosphate + L-glutamate + phosphate + 3 H2O + H(+). The protein operates within cofactor biosynthesis; pyridoxal 5'-phosphate biosynthesis. Catalyzes the formation of pyridoxal 5'-phosphate from ribose 5-phosphate (RBP), glyceraldehyde 3-phosphate (G3P) and ammonia. The ammonia is provided by the PdxT subunit. Can also use ribulose 5-phosphate and dihydroxyacetone phosphate as substrates, resulting from enzyme-catalyzed isomerization of RBP and G3P, respectively. This Bacillus cereus (strain B4264) protein is Pyridoxal 5'-phosphate synthase subunit PdxS.